The following is a 444-amino-acid chain: Chromosomal replication initiator protein DnaA (444 aa).

A domain I, interacts with DnaA modulators region spans residues 1–73 (MDSSAQQLWH…AEVVQDIVGY (73 aa)). The segment at 73–104 (YPVEIQLTAQQGDLIAIFQPHTSLESELSPTN) is domain II. Residues 105-321 (QLNPKYNFSR…GALIRATTYI (217 aa)) form a domain III, AAA+ region region. ATP-binding residues include Gly-149, Gly-151, Lys-152, and Thr-153. The segment at 322–444 (SISGLPMTVE…ERINSLSRNQ (123 aa)) is domain IV, binds dsDNA.

It belongs to the DnaA family. Oligomerizes as a right-handed, spiral filament on DNA at oriC.

The protein resides in the cytoplasm. Plays an essential role in the initiation and regulation of chromosomal replication. ATP-DnaA binds to the origin of replication (oriC) to initiate formation of the DNA replication initiation complex once per cell cycle. Binds the DnaA box (a 9 base pair repeat at the origin) and separates the double-stranded (ds)DNA. Forms a right-handed helical filament on oriC DNA; dsDNA binds to the exterior of the filament while single-stranded (ss)DNA is stabiized in the filament's interior. The ATP-DnaA-oriC complex binds and stabilizes one strand of the AT-rich DNA unwinding element (DUE), permitting loading of DNA polymerase. After initiation quickly degrades to an ADP-DnaA complex that is not apt for DNA replication. Binds acidic phospholipids. The protein is Chromosomal replication initiator protein DnaA of Microcystis aeruginosa (strain NIES-843 / IAM M-2473).